We begin with the raw amino-acid sequence, 1190 residues long: MACNLSPVNEMADSITSSTPSEIVYGGPGSPDEHRTMSDKVQTMASAIYRELETMIKVHGEDGVKTLMPLVVNVLEALDLAYLERDEQTAELEMLKEDNEQLQTQYEREKALRKQTEQKYIEIEDTLIGQNKELDKKIESLESIMRMLELKAKNATDHASRLEEREVEQKLEFDRLHERYNTLLRTHVDHMERTKYLMGSEKFELMQNMPLPNMQLRNKMGMAASVDASSIRGVSDLISAHMTQSTTMDVNLANHITNEDWQDEFSSDIEPSPRDIPQSSADALTSPITTKEPTPKREAASPKQSEEEEADETTSVDPKENNDLLGADLTDDESDWNGLGLIPRRHRPNEMLDDDDTSDDGSLGMGREVENLIKENSELLDMKNALNIVKNDLINQVDELNSENMILRDENLSRQMVSEKMQEQITKHEEEIKTLKQKLMEKENEQEEDDVPMAMRKRFTRSEMQRVLMDRNAYKEKLMELEESIKWTEMQRAKKMQQQQQNVNQKKSGGIWEFFSSLLGDSVTPPASSRGNRASSSRGKMTRSVEYIDPDMISERRAAERREQYKLVREHVKKEDGRIEAYGWSLPNVEAEVSSVPIPVCCRPLLDNEPSLKIWCATGVVLRGGRDERGQWIVGDPIYFAPASMKKTKTSNHRPELEDEIKRARNLDARESELDEWQSSSLVWVVSSNQGKSLIAVLDANNPNNIIETFPACDSHLLCIQAVSGVMEGEPEMNEEQSKKYLSGGGKIKDLPEGLDGTDLGACEWVELRKMEDSEDGVPTYCSNDMKPSPKRTRDFSISEVAPVDSSAPVKEDPLPPPANRPGGRAALPPHIRDAMSKYDGVSGQMSGALPTVWMGGQNQYIYIHSAVTAWKQCLRRIKMPDAVLSIVHYKSRIFAALANGTIAIFHRNKHGEWSDEGYHSLRVGSATSSVRSLCLVSTNIWATYKNCVVVLDAESLQIVKVFAAHPRKDSQVRNMQWVGAGVWLSIRLDSTLRLYHAHTYEHLQDVDIEPYVTKMLGTSKLDFSYMRTTALLVSNRRLWIGTGTGVIISVPFSGQLEKKIETKDSKRPAGPGGLVRVYGATSENATNDEKTNDDFIPYCNLAHAQLSFHGHKDSVKFFLGVPGASKNGEDESAEVTLRRMLIMSGGDGYIDFRIGEENEPELTGQSIRPRDMSHLIIWEVDAELPILSK.

Residues 1-35 (MACNLSPVNEMADSITSSTPSEIVYGGPGSPDEHR) are disordered. Residues 24-112 (VYGGPGSPDE…QTQYEREKAL (89 aa)) form the RH1 domain. A coiled-coil region spans residues 78-165 (LDLAYLERDE…TDHASRLEER (88 aa)). The segment at 263-364 (DEFSSDIEPS…DDTSDDGSLG (102 aa)) is disordered. Positions 277-292 (PQSSADALTSPITTKE) are enriched in polar residues. A coiled-coil region spans residues 383–491 (KNALNIVKND…EESIKWTEMQ (109 aa)). The RH2 domain occupies 456–542 (RKRFTRSEMQ…RASSSRGKMT (87 aa)). The disordered stretch occupies residues 775–829 (EDGVPTYCSNDMKPSPKRTRDFSISEVAPVDSSAPVKEDPLPPPANRPGGRAALP).

It belongs to the JIP scaffold family. Expressed in neurons of the ventral cord, retrovesicular and preanal ganglia and nerve ring, intestinal cells, seam and hypodermal cells, body wall, head muscle and pharynx.

It localises to the cytoplasm. The protein resides in the perinuclear region. Its function is as follows. The JNK-interacting protein (JIP) group of scaffold proteins selectively mediates JNK signaling by aggregating specific components of the MAPK cascade to form a functional JNK signaling module. May function as a regulator of synaptic vesicle transport, through interactions with the JNK-signaling components and motor proteins. Binds specific components of the JNK signaling pathway namely jnk-1, jkk-1 and sek-1. Associates with components of the motor protein, kinesin-1. Pre-assembled unc-16 scaffolding complexes are then transported as a cargo of kinesin, to the required subcellular location. Regulates the retrograde transport of autophagosomes from the neurites to the cell body of AIY interneurons. The protein is JNK-interacting protein of Caenorhabditis elegans.